The following is a 331-amino-acid chain: CRISPR-associated endonuclease Cas1 1 (331 aa).

Residues Glu161, His226, and Glu241 each contribute to the Mn(2+) site.

This sequence belongs to the CRISPR-associated endonuclease Cas1 family. As to quaternary structure, homodimer, forms a heterotetramer with a Cas2 homodimer. Requires Mg(2+) as cofactor. Mn(2+) serves as cofactor.

Its function is as follows. CRISPR (clustered regularly interspaced short palindromic repeat), is an adaptive immune system that provides protection against mobile genetic elements (viruses, transposable elements and conjugative plasmids). CRISPR clusters contain spacers, sequences complementary to antecedent mobile elements, and target invading nucleic acids. CRISPR clusters are transcribed and processed into CRISPR RNA (crRNA). Acts as a dsDNA endonuclease. Involved in the integration of spacer DNA into the CRISPR cassette. This is CRISPR-associated endonuclease Cas1 1 from Methanospirillum hungatei JF-1 (strain ATCC 27890 / DSM 864 / NBRC 100397 / JF-1).